The primary structure comprises 1202 residues: PAN2-PAN3 deadenylation complex catalytic subunit PAN2 (1202 aa).

4 WD repeats span residues Asp-153–Ala-193, Glu-195–Glu-231, Val-244–Pro-280, and Pro-328–Pro-367. The interval Tyr-368–His-485 is linker. In terms of domain architecture, USP spans Met-486 to Arg-924. Ser-791 carries the phosphoserine modification. Residues Val-975–Tyr-1147 form the Exonuclease domain. A divalent metal cation contacts are provided by Asp-978, Glu-980, Asp-1087, and Asp-1139. Phosphoserine is present on Ser-1189.

This sequence belongs to the peptidase C19 family. PAN2 subfamily. Forms a heterotrimer with an asymmetric homodimer of the regulatory subunit PAN3 to form the poly(A)-nuclease (PAN) deadenylation complex. Interacts with PAN3 isoform 1/Pan3L and isoform 3/Pan3S. Interacts with ZFP36. The cofactor is a divalent metal cation.

The protein localises to the cytoplasm. It localises to the P-body. Its subcellular location is the nucleus. The catalysed reaction is Exonucleolytic cleavage of poly(A) to 5'-AMP.. Its activity is regulated as follows. Positively regulated by the regulatory subunit PAN3. In terms of biological role, catalytic subunit of the poly(A)-nuclease (PAN) deadenylation complex, one of two cytoplasmic mRNA deadenylases involved in general and miRNA-mediated mRNA turnover. PAN specifically shortens poly(A) tails of RNA and the activity is stimulated by poly(A)-binding protein (PABP). PAN deadenylation is followed by rapid degradation of the shortened mRNA tails by the CCR4-NOT complex. Deadenylated mRNAs are then degraded by two alternative mechanisms, namely exosome-mediated 3'-5' exonucleolytic degradation, or deadenylation-dependent mRNA decaping and subsequent 5'-3' exonucleolytic degradation by XRN1. Also acts as an important regulator of the HIF1A-mediated hypoxic response. Required for HIF1A mRNA stability independent of poly(A) tail length regulation. The protein is PAN2-PAN3 deadenylation complex catalytic subunit PAN2 of Homo sapiens (Human).